The sequence spans 377 residues: Glutamate 5-kinase (377 aa).

Position 20 (Lys20) interacts with ATP. Substrate is bound by residues Ser60, Asp147, and Asn159. 179–180 (TD) serves as a coordination point for ATP. The 79-residue stretch at 285-363 (AGRLVIDDGA…DKVYQVLGEA (79 aa)) folds into the PUA domain.

Belongs to the glutamate 5-kinase family.

It localises to the cytoplasm. The catalysed reaction is L-glutamate + ATP = L-glutamyl 5-phosphate + ADP. The protein operates within amino-acid biosynthesis; L-proline biosynthesis; L-glutamate 5-semialdehyde from L-glutamate: step 1/2. In terms of biological role, catalyzes the transfer of a phosphate group to glutamate to form L-glutamate 5-phosphate. The chain is Glutamate 5-kinase from Acinetobacter baumannii (strain SDF).